A 159-amino-acid polypeptide reads, in one-letter code: MRCPFCRHDDTQVVDSRVSEDGAAIRRRRRCSACDKRFTTYERVELALPAVVKKDGSRTEFDRRKIVASMQLALRKRPVAADAIDAAVARIEYQLLASGEREVRSEKLGELVMNELRQLDTIAYVRFASVYRRFEDVSEFEDVIEEFRRAAPAKTPRKR.

The segment at 3–34 is a zinc-finger region; that stretch reads CPFCRHDDTQVVDSRVSEDGAAIRRRRRCSAC. The region spanning 49 to 139 is the ATP-cone domain; it reads PAVVKKDGSR…VYRRFEDVSE (91 aa).

Belongs to the NrdR family. The cofactor is Zn(2+).

Functionally, negatively regulates transcription of bacterial ribonucleotide reductase nrd genes and operons by binding to NrdR-boxes. The polypeptide is Transcriptional repressor NrdR (Burkholderia pseudomallei (strain 1106a)).